The primary structure comprises 157 residues: Phosphopantetheine adenylyltransferase (157 aa).

Residue Ser8 participates in substrate binding. ATP contacts are provided by residues 8 to 9 and His16; that span reads SF. Lys40, Leu72, and Arg86 together coordinate substrate. ATP-binding positions include 87 to 89, Glu97, and 121 to 127; these read GLR and FGTISSS.

It belongs to the bacterial CoaD family. As to quaternary structure, homohexamer. Requires Mg(2+) as cofactor.

It localises to the cytoplasm. The catalysed reaction is (R)-4'-phosphopantetheine + ATP + H(+) = 3'-dephospho-CoA + diphosphate. The protein operates within cofactor biosynthesis; coenzyme A biosynthesis; CoA from (R)-pantothenate: step 4/5. Reversibly transfers an adenylyl group from ATP to 4'-phosphopantetheine, yielding dephospho-CoA (dPCoA) and pyrophosphate. The chain is Phosphopantetheine adenylyltransferase from Cutibacterium acnes (strain DSM 16379 / KPA171202) (Propionibacterium acnes).